A 336-amino-acid polypeptide reads, in one-letter code: Mitochondrial import receptor subunit TOM40 homolog (336 aa).

The segment at 1–58 (MGNVLAASSPAPPAAGSPPAPGLVSVPPGFTMPPVAGLTPTPDKKETQEDRLPNPGTF) is disordered. A compositionally biased stretch (pro residues) spans 10-21 (PAPPAAGSPPAP). The segment covering 42–52 (PDKKETQEDRL) has biased composition (basic and acidic residues).

The protein belongs to the Tom40 family. Forms part of the preprotein translocase complex of the outer mitochondrial membrane (TOM complex). Interacts with mitochondrial targeting sequences.

Its subcellular location is the mitochondrion outer membrane. Channel-forming protein essential for import of protein precursors into mitochondria. This Xenopus tropicalis (Western clawed frog) protein is Mitochondrial import receptor subunit TOM40 homolog (tomm40).